Consider the following 52-residue polypeptide: Insulin (52 aa).

Cystine bridges form between Cys-9–Cys-38, Cys-21–Cys-51, and Cys-37–Cys-42.

This sequence belongs to the insulin family. In terms of assembly, heterodimer of a B chain and an A chain linked by two disulfide bonds.

The protein localises to the secreted. In terms of biological role, insulin decreases blood glucose concentration. It increases cell permeability to monosaccharides, amino acids and fatty acids. It accelerates glycolysis, the pentose phosphate cycle, and glycogen synthesis in liver. The sequence is that of Insulin (ins) from Piaractus mesopotamicus (Small-scaled pacu).